A 330-amino-acid polypeptide reads, in one-letter code: L-lactate dehydrogenase (330 aa).

NAD(+) is bound by residues Val-31, Asp-52, Lys-57, and 96 to 97 (GA). Substrate-binding positions include Gln-99, Arg-105, and 137–140 (NPVD). NAD(+) is bound by residues 135-137 (VSN) and Ser-160. 165–168 (DTAR) contacts substrate. The beta-D-fructose 1,6-bisphosphate site is built by Arg-170 and His-185. Catalysis depends on His-192, which acts as the Proton acceptor. Tyr-238 carries the phosphotyrosine modification. Thr-247 provides a ligand contact to substrate.

Belongs to the LDH/MDH superfamily. LDH family. Homotetramer.

Its subcellular location is the cytoplasm. It carries out the reaction (S)-lactate + NAD(+) = pyruvate + NADH + H(+). Its pathway is fermentation; pyruvate fermentation to lactate; (S)-lactate from pyruvate: step 1/1. With respect to regulation, allosterically activated by fructose 1,6-bisphosphate (FBP). Catalyzes the conversion of lactate to pyruvate. The sequence is that of L-lactate dehydrogenase from Gloeobacter violaceus (strain ATCC 29082 / PCC 7421).